The sequence spans 327 residues: MPHLAELVANARAAIEDAQDVAALDLVRVEYLGKKGHLTLQMSSLRDLPVEERPAAGAVINQVKQEVQEALNIRKEKLETDLLNFRLAAEKIDVSLPGRRMENGGLHPVNRTIERIETFFGELGFSIESGPEIEDDYHNFDALNIPAHHPARADHDTFWFDAKRLLRTQTSGVQVRTMHSQQPPIRVIAPGRVYRNDYDQTHTPMFHQVEGLIIDRDISFTSLKGTLHDFLTNFFEEDLQVRFRPSYFPFTEPSAEVDVMGKNGKWLEVLGCGMVHPNVLHNVGLDPEIYSGFAFGMGVERLTMLRYGVTDLRAFFENDLRFLKQFK.

A Mg(2+)-binding site is contributed by glutamate 252.

This sequence belongs to the class-II aminoacyl-tRNA synthetase family. Phe-tRNA synthetase alpha subunit type 1 subfamily. As to quaternary structure, tetramer of two alpha and two beta subunits. It depends on Mg(2+) as a cofactor.

The protein resides in the cytoplasm. The enzyme catalyses tRNA(Phe) + L-phenylalanine + ATP = L-phenylalanyl-tRNA(Phe) + AMP + diphosphate + H(+). This chain is Phenylalanine--tRNA ligase alpha subunit, found in Photorhabdus laumondii subsp. laumondii (strain DSM 15139 / CIP 105565 / TT01) (Photorhabdus luminescens subsp. laumondii).